A 218-amino-acid polypeptide reads, in one-letter code: ETS domain-containing protein ets-7 (218 aa).

Residues 12–93 constitute a DNA-binding region (ETS); that stretch reads QRLLNFLRGL…KGKDSRYCFL (82 aa). Low complexity predominate over residues 131-161; it reads TSNFSLQSSPSSSSNSSSARTMSATSSPTSS. The segment at 131–162 is disordered; the sequence is TSNFSLQSSPSSSSNSSSARTMSATSSPTSSL.

The protein belongs to the ETS family.

It is found in the nucleus. In terms of biological role, probable transcription factor. Involved in responses to oxidative stress. This Caenorhabditis elegans protein is ETS domain-containing protein ets-7.